Here is a 416-residue protein sequence, read N- to C-terminus: MRQLCRGRVLGISVAIAHGVFSGSLNILLKFLISRYQFSFLTLVQCLTSSTAALSLELLRRLGLIAVPPFGLSLARSFAGVAVLSTLQSSLTLWSLRGLSLPMYVVFKRCLPLVTMLIGVLVLKNGAPSPGVLAAVLITTCGAALAGAGDLTGDPIGYVTGVLAVLVHAAYLVLIQKASADTEHGPLTAQYVIAVSATPLLVICSFASTDSIHAWTFPGWKDPAMVCIFVACILIGCAMNFTTLHCTYINSAVTTSFVGVVKSIATITVGMVAFSDVEPTSLFIAGVVVNTLGSIIYCVAKFMETRKQSNYEDLEAQPRGEEAQLSGDQLPFVMEELPGEGGNGRSEGGEAAGGPAQESRQEVRGSPRGVPLVAGSSEEGSRRSLKDAYLEVWRLVRGTRYMKKDYLIENEELPSP.

The next 10 membrane-spanning stretches (helical) occupy residues 9–29 (VLGISVAIAHGVFSGSLNILL), 38–58 (FSFLTLVQCLTSSTAALSLEL), 64–84 (LIAVPPFGLSLARSFAGVAVL), 103–123 (MYVVFKRCLPLVTMLIGVLVL), 131–151 (GVLAAVLITTCGAALAGAGDL), 155–175 (PIGYVTGVLAVLVHAAYLVLI), 187–207 (LTAQYVIAVSATPLLVICSFA), 224–244 (AMVCIFVACILIGCAMNFTTL), 257–277 (FVGVVKSIATITVGMVAFSDV), and 280–300 (TSLFIAGVVVNTLGSIIYCVA). Residues 334-384 (MEELPGEGGNGRSEGGEAAGGPAQESRQEVRGSPRGVPLVAGSSEEGSRRS) form a disordered region. Over residues 339-352 (GEGGNGRSEGGEAA) the composition is skewed to gly residues.

Belongs to the TPT transporter family. SLC35D subfamily. As to quaternary structure, could interact with ATG14, BECN1 and PIK3C3 that form the PI3KC3-C1/AIC/autophagy initiation complex; enhancing the formation of the AIC and promoting autophagy.

The protein resides in the cytoplasmic vesicle. It is found in the secretory vesicle. It localises to the synaptic vesicle membrane. The protein localises to the early endosome membrane. Its subcellular location is the endoplasmic reticulum membrane. It carries out the reaction UDP-alpha-D-glucose(in) = UDP-alpha-D-glucose(out). Its activity is regulated as follows. Inhibited by proton uncouplers that directly abolish the proton electrochemical gradient. In terms of biological role, probable UDP-glucose transmembrane transporter involved in UDP-glucose transport from the cytosol to the lumen of synaptic vesicles. It is involved in platelet dense granules maturation. Functionally, alternatively, could function as a molecular adapter enhancing the formation of the PI3KC3-C1/AIC/autophagy initiation complex to promote autophagy in dopaminergic neurons. Could also regulate the plasma membrane localization of the D(1A) dopamine receptor/DRD1 and dopamine signaling. The protein is Solute carrier family 35 member D3 of Homo sapiens (Human).